A 345-amino-acid polypeptide reads, in one-letter code: Uroporphyrinogen decarboxylase (345 aa).

Substrate-binding positions include 28–32 (RQAGR), aspartate 77, tyrosine 153, serine 208, and histidine 322.

Belongs to the uroporphyrinogen decarboxylase family. In terms of assembly, homodimer.

The protein localises to the cytoplasm. It carries out the reaction uroporphyrinogen III + 4 H(+) = coproporphyrinogen III + 4 CO2. Its pathway is porphyrin-containing compound metabolism; protoporphyrin-IX biosynthesis; coproporphyrinogen-III from 5-aminolevulinate: step 4/4. Functionally, catalyzes the decarboxylation of four acetate groups of uroporphyrinogen-III to yield coproporphyrinogen-III. This chain is Uroporphyrinogen decarboxylase, found in Solibacter usitatus (strain Ellin6076).